Here is a 132-residue protein sequence, read N- to C-terminus: Small ribosomal subunit protein uS12 (132 aa).

D89 bears the 3-methylthioaspartic acid mark. Positions 101–132 (TLDASGAAGPSSTNKATRNRKRSKYGVKRPKA) are disordered. The span at 117-132 (TRNRKRSKYGVKRPKA) shows a compositional bias: basic residues.

Belongs to the universal ribosomal protein uS12 family. In terms of assembly, part of the 30S ribosomal subunit. Contacts proteins S8 and S17. May interact with IF1 in the 30S initiation complex.

Its function is as follows. With S4 and S5 plays an important role in translational accuracy. Functionally, interacts with and stabilizes bases of the 16S rRNA that are involved in tRNA selection in the A site and with the mRNA backbone. Located at the interface of the 30S and 50S subunits, it traverses the body of the 30S subunit contacting proteins on the other side and probably holding the rRNA structure together. The combined cluster of proteins S8, S12 and S17 appears to hold together the shoulder and platform of the 30S subunit. In Sorangium cellulosum (strain So ce56) (Polyangium cellulosum (strain So ce56)), this protein is Small ribosomal subunit protein uS12.